A 993-amino-acid chain; its full sequence is DNA double-strand break repair Rad50 ATPase (993 aa).

Residues Arg-12, 32 to 38 (NGSGKSS), and Gln-133 each bind ATP. Coiled-coil stretches lie at residues 192–222 (LENLEKLKNEVSESEILKEEILKKYENLEKL) and 402–493 (EELK…LEKT). The Zinc-hook domain occupies 452 to 556 (ENELKEKYED…KLNEIDSFKL (105 aa)). 2 residues coordinate Zn(2+): Cys-497 and Cys-500. Coiled coils occupy residues 570–612 (KVEE…LEND), 646–677 (DSSKIENEKKSLENLKDELKNTIYNLEREINL), and 702–731 (ETEKSDFENKLSECKENYEKYMESLAVLKN).

This sequence belongs to the SMC family. RAD50 subfamily. As to quaternary structure, homodimer. Forms a heterotetramer composed of two Mre11 subunits and two Rad50 subunits. The cofactor is Zn(2+).

In terms of biological role, part of the Rad50/Mre11 complex, which is involved in the early steps of DNA double-strand break (DSB) repair. The complex may facilitate opening of the processed DNA ends to aid in the recruitment of HerA and NurA. Rad50 controls the balance between DNA end bridging and DNA resection via ATP-dependent structural rearrangements of the Rad50/Mre11 complex. In Methanococcus maripaludis (strain DSM 14266 / JCM 13030 / NBRC 101832 / S2 / LL), this protein is DNA double-strand break repair Rad50 ATPase.